A 221-amino-acid polypeptide reads, in one-letter code: Nucleolar protein 3 (221 aa).

A lipid anchor (N-myristoyl glycine) is attached at G2. The region spanning 4 to 95 (MQERPSETID…MPDPAWDWQH (92 aa)) is the CARD domain. The interval 20–70 (VETLQADSGLLLDALVARGVLTGPEYEALDALPDAERRVRRLLLLVQSKGE) is essential for interaction with BAX. The interval 107–221 (PPCPGHWTPE…GDESEGCENT (115 aa)) is disordered. A compositionally biased stretch (acidic residues) spans 132 to 143 (EEEEIGGPEDSE). At T149 the chain carries Phosphothreonine; by CK2. Acidic residues-rich tracts occupy residues 165-201 (PDLEQEMEPEPEPEVEPEPEPEPEPEPEPEPEPEPEP) and 209-221 (FQEGDESEGCENT).

As to quaternary structure, oligomerizes (via CARD doamin). Interacts (via CARD domain) with CASP2; inhibits CASP2 activity in a phosphorylation-dependent manner. Interacts with CASP8; decreases CASP8 activity in a mitochondria localization- and phosphorylation-dependent manner and this interaction is dissociated by calcium. Interacts with TFPT; translocates NOL3 into the nucleus and negatively regulated TFPT-induced cell death. Interacts directly (via CARD domain) with FAS and FADD (via DED domain); inhibits death-inducing signaling complex (DISC) assembly by inhibiting the increase in FAS-FADD binding induced by FAS activation. Interacts (via CARD domain) with BAX (via a C-terminal 33 residues); inhibits BAX activation and translocation and consequently cytochrome c release from mitochondria. Interacts with PPM1G; may dephosphorylate NOL3. Interacts (via CARD domain) with BBC3 (via BH3 domain); preventing the association of BBC3 with BCL2 and resulting in activation of CASP8. Interacts (via CARD domain) with BAD(via BH3 domain); preventing the association of BAD with BCL2. Interacts directly (via CARD domain) with TNFRSF1A; inhibits TNF-signaling pathway. Post-translationally, phosphorylation at Thr-149 is required for its antiapoptotic effect by blocking death-inducing signaling complex (DISC) activity through the control of interaction with CASP8. Phosphorylation at Thr-149 results in translocation to mitochondria and this translocation enables the binding to CASP8. Dephosphorylated at Thr-149 by calcineurin; doesn't inhibit the association between FADD and CASP8 and the consequent apoptosis. In terms of processing, polyubiquitinated by MDM2; promoting proteasomal-dependent degradation in response to apoptotic stimuli. In terms of tissue distribution, highly expressed in skeletal muscle, heart and medulla.

The protein localises to the cytoplasm. It is found in the mitochondrion. The protein resides in the sarcoplasmic reticulum. Its subcellular location is the membrane. Apoptosis repressor that blocks multiple modes of cell death. Inhibits extrinsic apoptotic pathways through two different ways. Firstly by interacting with FAS and FADD upon FAS activation blocking death-inducing signaling complex (DISC) assembly. Secondly by interacting with CASP8 in a mitochondria localization- and phosphorylation-dependent manner, limiting the amount of soluble CASP8 available for DISC-mediated activation. Inhibits intrinsic apoptotic pathway in response to a wide range of stresses, through its interaction with BAX resulting in BAX inactivation, preventing mitochondrial dysfunction and release of pro-apoptotic factors. Inhibits calcium-mediated cell death by functioning as a cytosolic calcium buffer, dissociating its interaction with CASP8 and maintaining calcium homeostasis. Negatively regulates oxidative stress-induced apoptosis by phosphorylation-dependent suppression of the mitochondria-mediated intrinsic pathway, by blocking CASP2 activation and BAX translocation. Negatively regulates hypoxia-induced apoptosis in part by inhibiting the release of cytochrome c from mitochondria in a caspase-independent manner. Also inhibits TNF-induced necrosis by preventing TNF-signaling pathway through TNFRSF1A interaction abrogating the recruitment of RIPK1 to complex I. Finally through its role as apoptosis repressor, promotes vascular remodeling through inhibition of apoptosis and stimulation of proliferation, in response to hypoxia. Inhibits too myoblast differentiation through caspase inhibition. The polypeptide is Nucleolar protein 3 (Nol3) (Rattus norvegicus (Rat)).